Here is a 766-residue protein sequence, read N- to C-terminus: Slit homolog 2 protein (766 aa).

Positions 1-30 (MSGIGWQTLSLSLALVLSILNKVAPHACPA) are cleaved as a signal peptide. Positions 31–55 (QCSCSGSTVDCHGLALRIVPRNIPR) constitute an LRRNT domain. LRR repeat units lie at residues 56–77 (NTER…DFAG), 80–101 (HLRI…AFHD), 104–125 (ELER…LFLG), 128–149 (KLYR…AFRG), 152–173 (DIKN…AFRA), and 176–197 (DLEV…SFNH). An N-linked (GlcNAc...) asparagine glycan is attached at asparagine 66. N-linked (GlcNAc...) asparagine glycosylation is present at asparagine 186. Residues 209 to 259 (NNLYCDCHLAWLSDWLRQRPRVGLYTQCMGPSHLRGHNVAEVQKREFVCSD) enclose the LRRCT 1 domain. Positions 268–304 (MAPSCSVLHCPIACTCSNNIVDCRGKGLTEIPTNLPE) constitute an LRRNT 2 domain. Cysteine 281 and cysteine 290 are disulfide-bonded. 5 LRR repeats span residues 305–326 (TITE…AFSP), 329–350 (KLRR…AFQG), 353–374 (SLNS…LFEG), 377–398 (SLQL…AFQD), and 401–422 (NLNL…TFSA). The region spanning 434–484 (NPFICDCHLKWLADYLHTNPIETSGARCTSPRRLANKRIGQIKSKKFRCSG) is the LRRCT 2 domain. 4 disulfide bridges follow: cysteine 438–cysteine 461, cysteine 440–cysteine 482, cysteine 502–cysteine 508, and cysteine 506–cysteine 515. An LRRNT 3 domain is found at 493 to 529 (SGDCFADLACPEKCRCEGTTVDCSNQKLNKIPDHIPQ). LRR repeat units lie at residues 530–551 (YTAE…GIFK), 555–576 (QLRK…AFEG), 579–600 (GVNE…MFKG), 603–624 (SLKT…SFTG), and 627–648 (SVRL…AFGT). Asparagine 560 carries N-linked (GlcNAc...) asparagine glycosylation. Asparagine 619 carries N-linked (GlcNAc...) asparagine glycosylation. Positions 660-710 (NPFNCNCHLAWLGEWLRRKRIVTGNPRCQKPYFLKEIPIQDVAIQDFTCDD) constitute an LRRCT 3 domain. Disulfide bonds link cysteine 664–cysteine 687, cysteine 666–cysteine 708, cysteine 723–cysteine 729, and cysteine 727–cysteine 736. The LRRNT 4 domain occupies 714 to 750 (DNSCSPLSRCPSECTCLDTVVRCSNKGLKVLPKGIPR).

In terms of assembly, homodimer. Binds ROBO1 and ROBO2 with high affinity. Interacts with GREM1.

Its subcellular location is the secreted. In terms of biological role, thought to act as molecular guidance cue in cellular migration, and function appears to be mediated by interaction with roundabout homolog receptors. During neural development involved in axonal navigation at the ventral midline of the neural tube and projection of axons to different regions. SLIT1 and SLIT2 seem to be essential for midline guidance in the forebrain by acting as repulsive signal preventing inappropriate midline crossing by axons projecting from the olfactory bulb. In spinal cord development may play a role in guiding commissural axons once they reached the floor plate by modulating the response to netrin. In vitro, silences the attractive effect of NTN1 but not its growth-stimulatory effect and silencing requires the formation of a ROBO1-DCC complex. May be implicated in spinal cord midline post-crossing axon repulsion. In vitro, only commissural axons that crossed the midline responded to SLIT2. In the developing visual system appears to function as repellent for retinal ganglion axons by providing a repulsion that directs these axons along their appropriate paths prior to, and after passage through, the optic chiasm. In vitro, collapses and repels retinal ganglion cell growth cones. Seems to play a role in branching and arborization of CNS sensory axons, and in neuronal cell migration. Seems to be involved in regulating leukocyte migration. The polypeptide is Slit homolog 2 protein (Slit2) (Rattus norvegicus (Rat)).